Consider the following 181-residue polypeptide: Cytochrome P450 monooxygenase dtpC (181 aa).

Cys125 is a heme binding site.

This sequence belongs to the cytochrome P450 family. Heme is required as a cofactor.

It functions in the pathway alkaloid biosynthesis. It participates in secondary metabolite biosynthesis. Functionally, cytochrome P450 monooxygenase; part of the gene cluster that mediates the biosynthesis of the dimeric diketopiperazine alkaloid ditryptophenaline. The nonribosomal peptide synthase dtpA accepts L-tryptophan and L-phenylalanine as its substrates and forms the phenylalanyl-tryptophanyl cyclic dipeptide product cyclophenylalanyltryptophenyl. The N-methyltransferase dtpB is responsible for the N-methylation of cyclophenylalanyltryptophenyl to yield cyclo-N-methylphenylalanyltryptophenyl. The cytochrome P450 monooxygenase is responsible not only for pyrroloindole ring formation but also for concurrent dimerization of N-methylphenylalanyltryptophanyl diketopiperazine monomers into a homodimeric product. In Aspergillus flavus (strain ATCC 200026 / FGSC A1120 / IAM 13836 / NRRL 3357 / JCM 12722 / SRRC 167), this protein is Cytochrome P450 monooxygenase dtpC.